Here is a 247-residue protein sequence, read N- to C-terminus: 5'-nucleotidase SurE (247 aa).

A divalent metal cation is bound by residues D8, D9, S39, and N91.

The protein belongs to the SurE nucleotidase family. A divalent metal cation is required as a cofactor.

The protein localises to the cytoplasm. The catalysed reaction is a ribonucleoside 5'-phosphate + H2O = a ribonucleoside + phosphate. Functionally, nucleotidase that shows phosphatase activity on nucleoside 5'-monophosphates. The polypeptide is 5'-nucleotidase SurE (Azoarcus sp. (strain BH72)).